The chain runs to 394 residues: MAKEAFLRKKPHINVGTIGHVDHGKTTLTSAITYVLAKKGLAQKMAYDQIDKAPEEKERGITINTAHVEYESDKRHYAHVDCPGHADYIKNMITGAAQMDGAILVVSAADGPMPQTREHILLARQVGVPYIVVFLNKVDMVDDKELLELVELEVRELLNQYGFPGDKIPIIKGSALKALEGDPEYEKNILELVEAMDNYIPIPERPKDQPFLMPIEDVFNIEGRGTVVTGRVERGTLKRMEEVEIVGIRPTTKTVVTDIEMFRKTLDTAEAGDNVGLLLRGIKKDDVERGQVVAKPGTITPHHKFNAQVYVLKKEEGGRHTAFFNGYRPQFFFRTTDVTGTVTLKEGVEMVMPGDNVEFMVELISPIAMEKSMRFAIREGGKTVGAGVVTEIIE.

The 195-residue stretch at lysine 10–glutamate 204 folds into the tr-type G domain. The segment at glycine 19 to threonine 26 is G1. Glycine 19–threonine 26 is a GTP binding site. Position 26 (threonine 26) interacts with Mg(2+). The segment at glycine 60–asparagine 64 is G2. Residues aspartate 81–glycine 84 form a G3 region. GTP contacts are provided by residues aspartate 81 to histidine 85 and asparagine 136 to aspartate 139. The G4 stretch occupies residues asparagine 136–aspartate 139. The tract at residues serine 174–leucine 176 is G5.

It belongs to the TRAFAC class translation factor GTPase superfamily. Classic translation factor GTPase family. EF-Tu/EF-1A subfamily. In terms of assembly, monomer.

Its subcellular location is the cytoplasm. It carries out the reaction GTP + H2O = GDP + phosphate + H(+). GTP hydrolase that promotes the GTP-dependent binding of aminoacyl-tRNA to the A-site of ribosomes during protein biosynthesis. This is Elongation factor Tu from Methylacidiphilum infernorum (isolate V4) (Methylokorus infernorum (strain V4)).